The primary structure comprises 504 residues: Acetyltransferase pyiB (504 aa).

Residues 1–18 (MGFLSAGGLWASLFRARI) form the signal peptide. Asparagine 84 carries an N-linked (GlcNAc...) asparagine glycan. Catalysis depends on histidine 181, which acts as the Proton acceptor. Residues asparagine 413 and asparagine 467 are each glycosylated (N-linked (GlcNAc...) asparagine).

This sequence belongs to the plant acyltransferase family.

It functions in the pathway mycotoxin biosynthesis. In terms of biological role, acetyltransferase; part of the gene cluster that mediates the biosynthesis of the mycotoxin pyrichalasin H, a tyrosine-derived cytochalasan that inhibits the growth of rice seedlings, but also inhibits lymphocyte capping and actin polymerization and alters cell morphology. Pyrichalasin H is indicated as the responsible agent for the genus-specific pathogenicity of M.grisea toward crabgrass. The first step in the pathway is catalyzed by the O-methyltransferase pyiA which methylates free tyrosine to generate the precursor O-methyltyrosine. The hybrid PKS-NRPS pyiS, assisted by the enoyl reductase pyiC, are responsible for fusion of the O-methyltyrosine precursor and the polyketide backbone. The polyketide synthase module (PKS) of pyiS is responsible for the synthesis of the polyketide backbone and the downstream nonribosomal peptide synthetase (NRPS) amidates the carboxyl end of the polyketide with the O-methyltyrosine precursor. As the NRPS A-domain demonstrates substrate tolerance, pyiS can also use phenylalanine, tyrosine and even para-chlorophenylalanine as amino acid precursor, which leads to the production of novel cytochalasans, including halogenated cytochalasans. Because pyiS lacks a designated enoylreductase (ER) domain, the required activity is provided the enoyl reductase pyiC. Reduction by the hydrolyase pyiE leads to 1,5-dihydropyrrolone, which is substrate for dehydration and intra-molecular Diels-Alder cyclization by the Diels-Alderase pyiF to yield the required isoindolone-fused macrocycle. The tailoring cytochrome P450 monooxygenases piyD and piyG catalyze the hydroxylation at C-18 and C-7, respectivily, whereas the short-chain dehydrogenase/reductase pyiH reduces the carbonyl at C-21 in preparation for the transfer of an acetyl group by the acetyltransferase pyiB. These 3 reactions whose order is not clear yet, lead to the production of O-methylpyrichalasin J, a deacetylated pyrichalasin H. Finally, pyiB to converts O-methylpyrichalasin J into the final product pyrichalasin H via acetylation of C-21. This Pyricularia grisea (Crabgrass-specific blast fungus) protein is Acetyltransferase pyiB.